The following is a 364-amino-acid chain: Aminomethyltransferase (364 aa).

It belongs to the GcvT family. In terms of assembly, the glycine cleavage system is composed of four proteins: P, T, L and H.

The enzyme catalyses N(6)-[(R)-S(8)-aminomethyldihydrolipoyl]-L-lysyl-[protein] + (6S)-5,6,7,8-tetrahydrofolate = N(6)-[(R)-dihydrolipoyl]-L-lysyl-[protein] + (6R)-5,10-methylene-5,6,7,8-tetrahydrofolate + NH4(+). The glycine cleavage system catalyzes the degradation of glycine. This chain is Aminomethyltransferase, found in Shewanella loihica (strain ATCC BAA-1088 / PV-4).